Consider the following 270-residue polypeptide: Chlorophyll a-b binding protein, chloroplastic (270 aa).

Residues Met1–Arg41 constitute a chloroplast transit peptide. A chlorophyll b-binding site is contributed by Trp68. Chlorophyll a-binding residues include Phe88, Glu107, and His110. Arg112 is a binding site for chlorophyll b. The helical transmembrane segment at Trp113 to Leu133 threads the bilayer. Gln144 serves as a coordination point for chlorophyll a. The helical transmembrane segment at Tyr146–Gly166 threads the bilayer. Val155, Glu165, and Arg168 together coordinate chlorophyll b. Positions 221, 222, 225, 227, 239, and 254 each coordinate chlorophyll a. The chain crosses the membrane as a helical span at residues Leu228–Ile248.

This sequence belongs to the light-harvesting chlorophyll a/b-binding (LHC) protein family. As to quaternary structure, the LHC complex consists of chlorophyll a-b binding proteins. The cofactor is Binds at least 14 chlorophylls (8 Chl-a and 6 Chl-b) and carotenoids such as lutein and neoxanthin.. In terms of processing, photoregulated by reversible phosphorylation of its threonine residues.

The protein localises to the plastid. It localises to the chloroplast thylakoid membrane. Its function is as follows. The light-harvesting complex (LHC) functions as a light receptor, it captures and delivers excitation energy to photosystems with which it is closely associated. The chain is Chlorophyll a-b binding protein, chloroplastic from Petunia hybrida (Petunia).